Reading from the N-terminus, the 273-residue chain is MSLSNAPLGQHVAYPSQYDPGLLFPIPRATNRASLQLGATLPFTGVDLWNAYELSWLDARGKPRVAMATFSFPADSPNIVESKSFKLYLNSFNQTRLPNAQALRDRLERDLAAAAGAPVGLEFISPQRFGELNMAELDGIYIDKLDIEIDTYEPAPQLLQCAPGDEVEETLATRLLKSNCPVTGQPDWASLQVRYRGRPIDRAALLKYVVSFRQHAEFHEHCVERIFGDIMRACQPRQLTVYARYTRRGGLDINPWRSNFESAPPADVRTARQ.

Residue 80–82 participates in substrate binding; sequence VES. 82-83 provides a ligand contact to NADPH; that stretch reads SK. Cysteine 180 (thioimide intermediate) is an active-site residue. The active-site Proton donor is the aspartate 187. 219-220 contributes to the substrate binding site; the sequence is HE. 248-249 lines the NADPH pocket; the sequence is RG.

This sequence belongs to the GTP cyclohydrolase I family. QueF type 2 subfamily. Homodimer.

Its subcellular location is the cytoplasm. The enzyme catalyses 7-aminomethyl-7-carbaguanine + 2 NADP(+) = 7-cyano-7-deazaguanine + 2 NADPH + 3 H(+). It functions in the pathway tRNA modification; tRNA-queuosine biosynthesis. In terms of biological role, catalyzes the NADPH-dependent reduction of 7-cyano-7-deazaguanine (preQ0) to 7-aminomethyl-7-deazaguanine (preQ1). This chain is NADPH-dependent 7-cyano-7-deazaguanine reductase, found in Bordetella bronchiseptica (strain ATCC BAA-588 / NCTC 13252 / RB50) (Alcaligenes bronchisepticus).